The following is an 896-amino-acid chain: DNA mismatch repair protein MutS (896 aa).

ATP is bound at residue 638-645 (GPNMSGKS).

Belongs to the DNA mismatch repair MutS family.

Functionally, this protein is involved in the repair of mismatches in DNA. It is possible that it carries out the mismatch recognition step. This protein has a weak ATPase activity. This Fusobacterium nucleatum subsp. nucleatum (strain ATCC 25586 / DSM 15643 / BCRC 10681 / CIP 101130 / JCM 8532 / KCTC 2640 / LMG 13131 / VPI 4355) protein is DNA mismatch repair protein MutS.